Consider the following 271-residue polypeptide: Coiled-coil domain-containing protein ORF29 (271 aa).

Residues 1-39 form a disordered region; sequence MNEKTESEIFEEQNSLYKPIKQEKKTPSTPESEDKNDQS. Residues 20–37 are compositionally biased toward basic and acidic residues; that stretch reads IKQEKKTPSTPESEDKND. The stretch at 208-228 forms a coiled coil; the sequence is RATQTQEILLNSLRKNLQMLE.

The polypeptide is Coiled-coil domain-containing protein ORF29 (Helicobacter pylori (strain 35A)).